Here is a 265-residue protein sequence, read N- to C-terminus: Tryptophan synthase alpha chain (265 aa).

Active-site proton acceptor residues include Glu41 and Asp52.

The protein belongs to the TrpA family. In terms of assembly, tetramer of two alpha and two beta chains.

It carries out the reaction (1S,2R)-1-C-(indol-3-yl)glycerol 3-phosphate + L-serine = D-glyceraldehyde 3-phosphate + L-tryptophan + H2O. It participates in amino-acid biosynthesis; L-tryptophan biosynthesis; L-tryptophan from chorismate: step 5/5. Its function is as follows. The alpha subunit is responsible for the aldol cleavage of indoleglycerol phosphate to indole and glyceraldehyde 3-phosphate. This chain is Tryptophan synthase alpha chain, found in Bacillus velezensis (strain DSM 23117 / BGSC 10A6 / LMG 26770 / FZB42) (Bacillus amyloliquefaciens subsp. plantarum).